The following is a 330-amino-acid chain: GMP reductase (330 aa).

Cys-180 acts as the Thioimidate intermediate in catalysis. 209-232 lines the NADP(+) pocket; the sequence is LIADGGIRHNGDIAKSVRFGASMV.

This sequence belongs to the IMPDH/GMPR family. GuaC type 2 subfamily.

It catalyses the reaction IMP + NH4(+) + NADP(+) = GMP + NADPH + 2 H(+). Catalyzes the irreversible NADPH-dependent deamination of GMP to IMP. It functions in the conversion of nucleobase, nucleoside and nucleotide derivatives of G to A nucleotides, and in maintaining the intracellular balance of A and G nucleotides. The polypeptide is GMP reductase (Lactobacillus gasseri (strain ATCC 33323 / DSM 20243 / BCRC 14619 / CIP 102991 / JCM 1131 / KCTC 3163 / NCIMB 11718 / NCTC 13722 / AM63)).